A 246-amino-acid chain; its full sequence is 1-(5-phosphoribosyl)-5-[(5-phosphoribosylamino)methylideneamino] imidazole-4-carboxamide isomerase (246 aa).

Aspartate 8 functions as the Proton acceptor in the catalytic mechanism. Residue aspartate 129 is the Proton donor of the active site.

This sequence belongs to the HisA/HisF family.

It is found in the cytoplasm. The enzyme catalyses 1-(5-phospho-beta-D-ribosyl)-5-[(5-phospho-beta-D-ribosylamino)methylideneamino]imidazole-4-carboxamide = 5-[(5-phospho-1-deoxy-D-ribulos-1-ylimino)methylamino]-1-(5-phospho-beta-D-ribosyl)imidazole-4-carboxamide. The protein operates within amino-acid biosynthesis; L-histidine biosynthesis; L-histidine from 5-phospho-alpha-D-ribose 1-diphosphate: step 4/9. The polypeptide is 1-(5-phosphoribosyl)-5-[(5-phosphoribosylamino)methylideneamino] imidazole-4-carboxamide isomerase (Nitrobacter hamburgensis (strain DSM 10229 / NCIMB 13809 / X14)).